The primary structure comprises 537 residues: Eukaryotic translation initiation factor 3 subunit L (537 aa).

The PCI domain maps to 301-513 (TFSSILLYIQ…IHIADTKVSH (213 aa)).

The protein belongs to the eIF-3 subunit L family. Component of the eukaryotic translation initiation factor 3 (eIF-3) complex.

It localises to the cytoplasm. Functionally, component of the eukaryotic translation initiation factor 3 (eIF-3) complex, which is involved in protein synthesis of a specialized repertoire of mRNAs and, together with other initiation factors, stimulates binding of mRNA and methionyl-tRNAi to the 40S ribosome. The eIF-3 complex specifically targets and initiates translation of a subset of mRNAs involved in cell proliferation. The polypeptide is Eukaryotic translation initiation factor 3 subunit L (Aedes aegypti (Yellowfever mosquito)).